A 278-amino-acid chain; its full sequence is Large ribosomal subunit protein uL2 (278 aa).

The segment at Val224–Lys278 is disordered.

Belongs to the universal ribosomal protein uL2 family. As to quaternary structure, part of the 50S ribosomal subunit. Forms a bridge to the 30S subunit in the 70S ribosome.

Functionally, one of the primary rRNA binding proteins. Required for association of the 30S and 50S subunits to form the 70S ribosome, for tRNA binding and peptide bond formation. It has been suggested to have peptidyltransferase activity; this is somewhat controversial. Makes several contacts with the 16S rRNA in the 70S ribosome. This is Large ribosomal subunit protein uL2 from Methylorubrum extorquens (strain CM4 / NCIMB 13688) (Methylobacterium extorquens).